A 254-amino-acid polypeptide reads, in one-letter code: Glycerol operon regulatory protein (254 aa).

The HTH iclR-type domain maps to 5–67 (IQSLERAAAM…PASGRYQLGA (63 aa)). Positions 27–46 (LSDIASTLGLAKGTAHGILR) form a DNA-binding region, H-T-H motif. In terms of domain architecture, IclR-ED spans 82–251 (LRARALVWTD…AAAVSRDLGA (170 aa)).

Functionally, may be an activator protein for the gylABX operon. The polypeptide is Glycerol operon regulatory protein (gylR) (Streptomyces griseus).